A 393-amino-acid polypeptide reads, in one-letter code: Phosphopentomutase (393 aa).

Positions 13, 286, 291, 327, 328, and 339 each coordinate Mn(2+).

This sequence belongs to the phosphopentomutase family. Mn(2+) serves as cofactor.

Its subcellular location is the cytoplasm. The catalysed reaction is 2-deoxy-alpha-D-ribose 1-phosphate = 2-deoxy-D-ribose 5-phosphate. It carries out the reaction alpha-D-ribose 1-phosphate = D-ribose 5-phosphate. The protein operates within carbohydrate degradation; 2-deoxy-D-ribose 1-phosphate degradation; D-glyceraldehyde 3-phosphate and acetaldehyde from 2-deoxy-alpha-D-ribose 1-phosphate: step 1/2. Functionally, isomerase that catalyzes the conversion of deoxy-ribose 1-phosphate (dRib-1-P) and ribose 1-phosphate (Rib-1-P) to deoxy-ribose 5-phosphate (dRib-5-P) and ribose 5-phosphate (Rib-5-P), respectively. The chain is Phosphopentomutase from Symbiobacterium thermophilum (strain DSM 24528 / JCM 14929 / IAM 14863 / T).